Reading from the N-terminus, the 144-residue chain is MNPARCRILAVGKVRRGWIQDGIDLYLKRLPGLTISELRDSNPDKEADAIRAALRPDETLIALMEQGDTLASVPFAQRLEQFGNQRLAFVIGGADGLTAELKAQAQWRLSLSPMTFPHELARLMLVEQLFRAQAIVQGSPYHRA.

S-adenosyl-L-methionine is bound by residues L63, G92, and 111–116; that span reads LSPMTF.

The protein belongs to the RNA methyltransferase RlmH family. In terms of assembly, homodimer.

Its subcellular location is the cytoplasm. The enzyme catalyses pseudouridine(1915) in 23S rRNA + S-adenosyl-L-methionine = N(3)-methylpseudouridine(1915) in 23S rRNA + S-adenosyl-L-homocysteine + H(+). In terms of biological role, specifically methylates the pseudouridine at position 1915 (m3Psi1915) in 23S rRNA. This is Ribosomal RNA large subunit methyltransferase H from Synechococcus sp. (strain CC9605).